The following is a 277-amino-acid chain: Inhibition of morphological differentiation protein (277 aa).

Positions 18, 20, and 192 each coordinate Mg(2+).

Belongs to the HAD-like hydrolase superfamily. SerB family.

In Streptomyces azureus, this protein is Inhibition of morphological differentiation protein.